A 210-amino-acid chain; its full sequence is MTFLKRVKEYVGDAFRAAKYIGQGMGVVFDHMGRRPVTVQYPFEKLIPSERFRGRIHFEFDKCIACEICVRVCPIDLPVVDWAYNPELKKKELYSYSIDFGVCIFCANCVEFCPTNCLSVTEDYELATYDRHDLNYHQVAMGRLPSKVTEDPMVTPLREFAYLPKGVIDPHDLPAGSQRAGKRPEEILAEMRAAKAAKEAEAKAAKAAAE.

2 consecutive 4Fe-4S ferredoxin-type domains span residues G54–A83 and Y94–D123. C63, C66, C69, C73, C103, C106, C109, and C113 together coordinate [4Fe-4S] cluster.

Belongs to the complex I 23 kDa subunit family. In terms of assembly, NDH-1 is composed of at least 11 different subunits. Requires [4Fe-4S] cluster as cofactor.

The protein resides in the cellular thylakoid membrane. The catalysed reaction is a plastoquinone + NADH + (n+1) H(+)(in) = a plastoquinol + NAD(+) + n H(+)(out). The enzyme catalyses a plastoquinone + NADPH + (n+1) H(+)(in) = a plastoquinol + NADP(+) + n H(+)(out). In terms of biological role, NDH-1 shuttles electrons from an unknown electron donor, via FMN and iron-sulfur (Fe-S) centers, to quinones in the respiratory and/or the photosynthetic chain. The immediate electron acceptor for the enzyme in this species is believed to be plastoquinone. Couples the redox reaction to proton translocation, and thus conserves the redox energy in a proton gradient. In Synechococcus sp. (strain JA-2-3B'a(2-13)) (Cyanobacteria bacterium Yellowstone B-Prime), this protein is NAD(P)H-quinone oxidoreductase subunit I.